The sequence spans 424 residues: Acetyl-CoA acetyltransferase, mitochondrial (424 aa).

The N-terminal 30 residues, 1–30, are a transit peptide targeting the mitochondrion; it reads MAALVALHGVVRRPLLRGLLQEVRCLERSY. The residue at position 63 (K63) is an N6-acetyllysine; alternate. The residue at position 63 (K63) is an N6-succinyllysine; alternate. Residue K75 is modified to N6-succinyllysine. The active-site Acyl-thioester intermediate is the C123. An N6-acetyllysine; alternate mark is found at K171, K178, K187, and K199. N6-succinyllysine; alternate occurs at positions 171, 178, 187, and 199. S204 is subject to Phosphoserine. Y216 is a binding site for CoA. K(+) is bound at residue Y216. An N6-acetyllysine; alternate mark is found at K220 and K227. Residues K220 and K227 each carry the N6-succinyllysine; alternate modification. The residue at position 240 (K240) is an N6-succinyllysine. At K242 the chain carries N6-acetyllysine; alternate. The residue at position 242 (K242) is an N6-succinyllysine; alternate. Residues K248 and K254 each carry the N6-acetyllysine modification. CoA-binding positions include 255-257 and K260; that span reads RVD. K260 is subject to N6-acetyllysine; alternate. The residue at position 260 (K260) is an N6-succinyllysine; alternate. N6-succinyllysine occurs at positions 263 and 265. K270 carries the post-translational modification N6-acetyllysine. Positions 277, 278, and 280 each coordinate K(+). Position 281 (S281) interacts with CoA. At K335 the chain carries N6-acetyllysine. K(+) is bound at residue V378. Residue C410 is the Proton donor/acceptor of the active site.

It belongs to the thiolase-like superfamily. Thiolase family. In terms of assembly, homotetramer. In terms of processing, succinylation at Lys-265, adjacent to a coenzyme A binding site. Desuccinylated by SIRT5.

The protein resides in the mitochondrion. The catalysed reaction is 2 acetyl-CoA = acetoacetyl-CoA + CoA. The enzyme catalyses propanoyl-CoA + acetyl-CoA = 2-methyl-3-oxobutanoyl-CoA + CoA. Its pathway is lipid metabolism; fatty acid beta-oxidation. Activated by potassium ions, but not sodium ions. This is one of the enzymes that catalyzes the last step of the mitochondrial beta-oxidation pathway, an aerobic process breaking down fatty acids into acetyl-CoA. Using free coenzyme A/CoA, catalyzes the thiolytic cleavage of medium- to long-chain 3-oxoacyl-CoAs into acetyl-CoA and a fatty acyl-CoA shortened by two carbon atoms. The activity of the enzyme is reversible and it can also catalyze the condensation of two acetyl-CoA molecules into acetoacetyl-CoA. Thereby, it plays a major role in ketone body metabolism. The chain is Acetyl-CoA acetyltransferase, mitochondrial (Acat1) from Mus musculus (Mouse).